A 393-amino-acid chain; its full sequence is MSLPLTRKDLMIVNMGPQHPSMHGVLRLIVTLDGEDVIDCEPILGYLHRGMEKIAENRTIIQYLPYVTRWDYLATMFTEAITVNAPEFLENIQIPQRASYIRVIMLELSRIASHLLWLGPFMADLGAQTPFFYIFRERELIYDLFEAATGMRMMHNYFRIGGVAADLPYGWIDKCLDFCDYFLRGVIEYQQLITQNPIFLERVEGVGFISGEEAVNWGLSGPMLRASGIQWDLRKVDLYESYNQFDWKVQWQKEGDSLARYLVRIGEMRESIKIIQQAVEKIPGGPYENLEVRRFKKAKNSEWNDFEYRFLGKKPSPNFELSKQELYARVEAPKGELGIYLVGDDSLFPWRWKIRPPGFINLQILPQLVKKMKLADIMTILGSIDIIMGEVDR.

This sequence belongs to the complex I 49 kDa subunit family. In terms of assembly, NDH is composed of at least 16 different subunits, 5 of which are encoded in the nucleus.

Its subcellular location is the plastid. It is found in the chloroplast thylakoid membrane. It carries out the reaction a plastoquinone + NADH + (n+1) H(+)(in) = a plastoquinol + NAD(+) + n H(+)(out). It catalyses the reaction a plastoquinone + NADPH + (n+1) H(+)(in) = a plastoquinol + NADP(+) + n H(+)(out). In terms of biological role, NDH shuttles electrons from NAD(P)H:plastoquinone, via FMN and iron-sulfur (Fe-S) centers, to quinones in the photosynthetic chain and possibly in a chloroplast respiratory chain. The immediate electron acceptor for the enzyme in this species is believed to be plastoquinone. Couples the redox reaction to proton translocation, and thus conserves the redox energy in a proton gradient. This chain is NAD(P)H-quinone oxidoreductase subunit H, chloroplastic, found in Oryza nivara (Indian wild rice).